We begin with the raw amino-acid sequence, 127 residues long: Probable 4-amino-4-deoxy-L-arabinose-phosphoundecaprenol flippase subunit ArnF (127 aa).

A helical transmembrane segment spans residues 1–21; the sequence is MMGYFWALMSVLLVSGAQLMM. Topologically, residues 22-48 are periplasmic; the sequence is KWAMVSLPPVGQTDALMSAFMSVTPGA. The helical transmembrane segment at 49–69 threads the bilayer; that stretch reads VALVIGLFAYVFSMGCWYMAL. At 70-77 the chain is on the cytoplasmic side; that stretch reads RRIALSKA. The chain crosses the membrane as a helical span at residues 78–98; sequence YPLLSLSYVLVWAAAIGLPWL. Residues 99-101 lie on the Periplasmic side of the membrane; it reads HEP. A helical transmembrane segment spans residues 102–122; the sequence is FSVGKLAGVSVIFVGLLLVCL. The Cytoplasmic segment spans residues 123 to 127; it reads PDKKS.

Belongs to the ArnF family. Heterodimer of ArnE and ArnF.

Its subcellular location is the cell inner membrane. Its pathway is bacterial outer membrane biogenesis; lipopolysaccharide biosynthesis. Translocates 4-amino-4-deoxy-L-arabinose-phosphoundecaprenol (alpha-L-Ara4N-phosphoundecaprenol) from the cytoplasmic to the periplasmic side of the inner membrane. This is Probable 4-amino-4-deoxy-L-arabinose-phosphoundecaprenol flippase subunit ArnF from Enterobacter sp. (strain 638).